The primary structure comprises 424 residues: Enolase (424 aa).

Q165 serves as a coordination point for (2R)-2-phosphoglycerate. Residue E207 is the Proton donor of the active site. 3 residues coordinate Mg(2+): D244, E283, and D310. Positions 335, 364, 365, and 386 each coordinate (2R)-2-phosphoglycerate. K335 acts as the Proton acceptor in catalysis.

Belongs to the enolase family. Requires Mg(2+) as cofactor.

It is found in the cytoplasm. The protein resides in the secreted. Its subcellular location is the cell surface. It carries out the reaction (2R)-2-phosphoglycerate = phosphoenolpyruvate + H2O. It functions in the pathway carbohydrate degradation; glycolysis; pyruvate from D-glyceraldehyde 3-phosphate: step 4/5. In terms of biological role, catalyzes the reversible conversion of 2-phosphoglycerate (2-PG) into phosphoenolpyruvate (PEP). It is essential for the degradation of carbohydrates via glycolysis. This Chlamydia abortus (strain DSM 27085 / S26/3) (Chlamydophila abortus) protein is Enolase.